Here is a 112-residue protein sequence, read N- to C-terminus: Ribosomal processing cysteine protease Prp (112 aa).

The active-site Proton donor is H22. C34 functions as the Nucleophile in the catalytic mechanism.

It belongs to the Prp family. Homodimer.

Functionally, an essential cysteine protease that cleaves the N-terminus from ribosomal protein bL27. This is Ribosomal processing cysteine protease Prp from Bacillus subtilis (strain 168).